The following is a 222-amino-acid chain: N-(5'-phosphoribosyl)anthranilate isomerase (222 aa).

The protein belongs to the TrpF family.

The enzyme catalyses N-(5-phospho-beta-D-ribosyl)anthranilate = 1-(2-carboxyphenylamino)-1-deoxy-D-ribulose 5-phosphate. The protein operates within amino-acid biosynthesis; L-tryptophan biosynthesis; L-tryptophan from chorismate: step 3/5. The sequence is that of N-(5'-phosphoribosyl)anthranilate isomerase from Rhizobium leguminosarum bv. trifolii (strain WSM2304).